Reading from the N-terminus, the 344-residue chain is Methionine import ATP-binding protein MetN 1 (344 aa).

The region spanning 2–241 (IELRNLSQRF…PHHEVTRALI (240 aa)) is the ABC transporter domain. Position 38 to 45 (38 to 45 (GRSGAGKS)) interacts with ATP.

Belongs to the ABC transporter superfamily. Methionine importer (TC 3.A.1.24) family. As to quaternary structure, the complex is composed of two ATP-binding proteins (MetN), two transmembrane proteins (MetI) and a solute-binding protein (MetQ).

The protein localises to the cell inner membrane. It catalyses the reaction L-methionine(out) + ATP + H2O = L-methionine(in) + ADP + phosphate + H(+). The catalysed reaction is D-methionine(out) + ATP + H2O = D-methionine(in) + ADP + phosphate + H(+). Functionally, part of the ABC transporter complex MetNIQ involved in methionine import. Responsible for energy coupling to the transport system. The polypeptide is Methionine import ATP-binding protein MetN 1 (Burkholderia orbicola (strain AU 1054)).